The following is a 526-amino-acid chain: MSVQQQQVDLRRTFAIISHPDAGKTTITEKVLLFGQALQRAGTVKGKKSGQHAKSDWMEMEKERGISITTSVMQFPYNDCLVNLLDTPGHEDFSEDTYRTLTAVDSCLMVIDVAKGVEARTVKLMEVTRLRDTPIITFMNKMDRDVRDPMEVMDEVEEVLKIKCAAITWPIGMGKEFKGIYHILDDEITLYQSGLGHMIQEKRVIKGLNNPELDKIIGNYADDLREELELVSGASHDFNLEEFLKGELTPVFFGTALGNFGVDHMLDGLTKWAPKPLPRKTDLREVTAEEEKFSGFVFKIQANMDPKHRDRIAFMRICSGKYEKGMKMKQVRLAKDVKIADAVTFMAGDRSNVEEAFAGDIIGLHNHGSIQIGDTFTAGEMMKFSGIPNFAPEMFRRIRLRDPLKAKQLQKGLIQLSEEGAVQVFRPFINNDMIVGAVGVLQFEVVVQRLKTEYKVDAIYEAISVATARWCTCDDERTLEQFKKKSGDYLALDGGNNLTYIAPTMVNLSLAQERNPDIVFHSTREH.

Residues 9–277 (DLRRTFAIIS…GLTKWAPKPL (269 aa)) enclose the tr-type G domain. GTP contacts are provided by residues 18–25 (SHPDAGKT), 86–90 (DTPGH), and 140–143 (NKMD).

It belongs to the TRAFAC class translation factor GTPase superfamily. Classic translation factor GTPase family. PrfC subfamily.

Its subcellular location is the cytoplasm. Increases the formation of ribosomal termination complexes and stimulates activities of RF-1 and RF-2. It binds guanine nucleotides and has strong preference for UGA stop codons. It may interact directly with the ribosome. The stimulation of RF-1 and RF-2 is significantly reduced by GTP and GDP, but not by GMP. The chain is Peptide chain release factor 3 from Colwellia psychrerythraea (strain 34H / ATCC BAA-681) (Vibrio psychroerythus).